Here is a 542-residue protein sequence, read N- to C-terminus: Keratin, type II cytoskeletal 75 (542 aa).

The span at 1–26 (MSRQSTVTFHSGSRRGFSTASATTPT) shows a compositional bias: polar residues. The interval 1–44 (MSRQSTVTFHSGSRRGFSTASATTPTAGRSRFSSVSVARSSGNS) is disordered. The tract at residues 1 to 139 (MSRQSTVTFH…DPTIQRVRKE (139 aa)) is head. Low complexity predominate over residues 27–42 (AGRSRFSSVSVARSSG). Residues 140–175 (EREQIKTLNNKFASFIDKVRFLEQQNKVLETKWNLL) form a coil 1A region. In terms of domain architecture, IF rod spans 140–453 (EREQIKTLNN…KLLEGEECRL (314 aa)). A linker 1 region spans residues 176–194 (QEQGSRTVRQNLEPFFDAY). Residues 195 to 287 (VNDLRRQLDS…VYEAELSQMQ (93 aa)) are coil 1B. Residues 288 to 310 (NQVSDTSVVLSMDNNRSLDLDSI) are linker 12. A coil 2 region spans residues 311–449 (IAEVKAQYED…ATYRKLLEGE (139 aa)). Residues 450-542 (ECRLSGEGVS…TSSSRKSYKH (93 aa)) form a tail region. The tract at residues 514–542 (TSSSRGPVGSGSSIKFVSSTSSSRKSYKH) is disordered.

Belongs to the intermediate filament family. Heterodimer of a type I and a type II keratin. May associate with KRT17.

Its function is as follows. Plays a central role in hair and nail formation. Essential component of keratin intermediate filaments in the companion layer of the hair follicle. The sequence is that of Keratin, type II cytoskeletal 75 (Krt75) from Rattus norvegicus (Rat).